The primary structure comprises 355 residues: 3-dehydroquinate synthase (355 aa).

NAD(+) is bound by residues 71–76 (EGEERK), 105–109 (GVVGD), 129–130 (TS), K142, and K151. Positions 184, 246, and 263 each coordinate Zn(2+).

Belongs to the sugar phosphate cyclases superfamily. Dehydroquinate synthase family. It depends on Co(2+) as a cofactor. Zn(2+) is required as a cofactor. NAD(+) serves as cofactor.

Its subcellular location is the cytoplasm. It catalyses the reaction 7-phospho-2-dehydro-3-deoxy-D-arabino-heptonate = 3-dehydroquinate + phosphate. The protein operates within metabolic intermediate biosynthesis; chorismate biosynthesis; chorismate from D-erythrose 4-phosphate and phosphoenolpyruvate: step 2/7. In terms of biological role, catalyzes the conversion of 3-deoxy-D-arabino-heptulosonate 7-phosphate (DAHP) to dehydroquinate (DHQ). This chain is 3-dehydroquinate synthase, found in Streptococcus pneumoniae (strain ATCC 700669 / Spain 23F-1).